Reading from the N-terminus, the 874-residue chain is MKILKTQTLRGPNYWSIRRQKLIQMRLDLEDVAEKPSNLIPGFYEGLVKILPSLVEHFCSRDHRGGFLERVQEGTYMGHIVEHIALELQELAGMPVGFGRTRETSTPGIYNVVFEYVYEEAGRYAGRVAVRLCNSIITTGAYGLDELAQDLSDLKDLRANSALGPSTETIIKEAEARQIPWMLLSARAMVQLGYGANQQRIQATLSNKTGILGVELACDKEGTKTTLAEAGIPVPRGTVIYYADELADAIADVGGYPIVLKPLDGNHGRGITIDINSQQEAEEAYDLASAASKTRSVIVERYYKGNDHRVLVINGKLVAVSERIPAHVTGNGSSTIEELIQETNEHPDRGDGHDNVLTRISIDRTSLGVLKRQGFEMDTVLKKGEVAYLRATANLSTGGIAIDRTDEIHPQNIWIAERVAKIIGLDIAGIDVVTPDITKPLTEVDGVIVEVNAAPGFRMHVAPSQGLPRNVAAPVIDMLFPDNHPSRIPILAVTGTNGKTTTTRLLAHIYRQTGKVVGYTSTDGIYLGDYMVEKGDNTGPVSAGVILRDPTVEVAVLECARGGILRSGLAFESCDVGVVLNVAEDHLGLGDIDTIEQMAKVKGVIAESVNADGYAVLNADDPLVAQMAKNVKGKIAYFSMSKDNPIIIDHLRRNGMAAVYENGYLSIFEGEWTLRIEKAENIPVTMKAMAPFMIANALAASLAAFVHGIDIELIRQGVRSFNPGANQTPGRMNLFDMKDFSVLIDYAHNPAGYLAVGSFVKNWKGDRLGVIGGPGDRRDEDLMLLGKIASQIFDHIIIKEDDDNRGRDRGTVADLIAKGIVAENPNASYDDILDETEAIETGLKKVDKGGLVVIFPESVTGSIEMIEKYHLSSE.

The ATP-grasp domain maps to 224–480 (KTTLAEAGIP…VAAPVIDMLF (257 aa)). An ATP-binding site is contributed by 495–501 (GTNGKTT).

This sequence in the C-terminal section; belongs to the MurCDEF family. As to quaternary structure, homodimer.

The catalysed reaction is [L-4-(L-arginin-2-N-yl)aspartate](n) + L-aspartate + ATP = [L-4-(L-arginin-2-N-yl)aspartate](n)-L-aspartate + ADP + phosphate + H(+). It carries out the reaction [L-4-(L-arginin-2-N-yl)aspartate](n)-L-aspartate + L-arginine + ATP = [L-4-(L-arginin-2-N-yl)aspartate](n+1) + ADP + phosphate + H(+). Its function is as follows. Catalyzes the ATP-dependent polymerization of arginine and aspartate to multi-L-arginyl-poly-L-aspartic acid (cyanophycin; a water-insoluble reserve polymer). The polypeptide is Cyanophycin synthetase (cphA) (Geminocystis herdmanii (strain PCC 6308) (Synechocystis sp. (strain PCC 6308))).